The sequence spans 283 residues: Bifunctional protein FolD (283 aa).

NADP(+)-binding positions include 163–165, Ser-188, and Ile-229; that span reads GRS.

This sequence belongs to the tetrahydrofolate dehydrogenase/cyclohydrolase family. As to quaternary structure, homodimer.

It carries out the reaction (6R)-5,10-methylene-5,6,7,8-tetrahydrofolate + NADP(+) = (6R)-5,10-methenyltetrahydrofolate + NADPH. The catalysed reaction is (6R)-5,10-methenyltetrahydrofolate + H2O = (6R)-10-formyltetrahydrofolate + H(+). It functions in the pathway one-carbon metabolism; tetrahydrofolate interconversion. Functionally, catalyzes the oxidation of 5,10-methylenetetrahydrofolate to 5,10-methenyltetrahydrofolate and then the hydrolysis of 5,10-methenyltetrahydrofolate to 10-formyltetrahydrofolate. The protein is Bifunctional protein FolD of Latilactobacillus sakei subsp. sakei (strain 23K) (Lactobacillus sakei subsp. sakei).